The chain runs to 429 residues: Glutamate-1-semialdehyde 2,1-aminomutase 2 (429 aa).

Residue K268 is modified to N6-(pyridoxal phosphate)lysine.

This sequence belongs to the class-III pyridoxal-phosphate-dependent aminotransferase family. HemL subfamily. In terms of assembly, homodimer. It depends on pyridoxal 5'-phosphate as a cofactor.

It localises to the cytoplasm. The catalysed reaction is (S)-4-amino-5-oxopentanoate = 5-aminolevulinate. It functions in the pathway porphyrin-containing compound metabolism; protoporphyrin-IX biosynthesis; 5-aminolevulinate from L-glutamyl-tRNA(Glu): step 2/2. This is Glutamate-1-semialdehyde 2,1-aminomutase 2 from Geobacillus thermodenitrificans (strain NG80-2).